The chain runs to 497 residues: ATP synthase subunit alpha 2 (497 aa).

Glycine 167–threonine 174 lines the ATP pocket.

It belongs to the ATPase alpha/beta chains family. F-type ATPases have 2 components, CF(1) - the catalytic core - and CF(0) - the membrane proton channel. CF(1) has five subunits: alpha(3), beta(3), gamma(1), delta(1), epsilon(1). CF(0) has four main subunits: a(1), b(1), b'(1) and c(9-12).

Its subcellular location is the cell inner membrane. The catalysed reaction is ATP + H2O + 4 H(+)(in) = ADP + phosphate + 5 H(+)(out). Produces ATP from ADP in the presence of a proton gradient across the membrane. The alpha chain is a regulatory subunit. The polypeptide is ATP synthase subunit alpha 2 (Cereibacter sphaeroides (strain ATCC 17029 / ATH 2.4.9) (Rhodobacter sphaeroides)).